The primary structure comprises 160 residues: Transcription elongation factor GreA (160 aa).

A coiled-coil region spans residues 43-76 (LSENAEYDAAREQQRQLENKIGDLESKLTRATIL).

This sequence belongs to the GreA/GreB family.

Its function is as follows. Necessary for efficient RNA polymerase transcription elongation past template-encoded arresting sites. The arresting sites in DNA have the property of trapping a certain fraction of elongating RNA polymerases that pass through, resulting in locked ternary complexes. Cleavage of the nascent transcript by cleavage factors such as GreA or GreB allows the resumption of elongation from the new 3'terminus. GreA releases sequences of 2 to 3 nucleotides. The polypeptide is Transcription elongation factor GreA (Chlorobium phaeobacteroides (strain BS1)).